The sequence spans 121 residues: Large ribosomal subunit protein bL12 (121 aa).

It belongs to the bacterial ribosomal protein bL12 family. As to quaternary structure, homodimer. Part of the ribosomal stalk of the 50S ribosomal subunit. Forms a multimeric L10(L12)X complex, where L10 forms an elongated spine to which 2 to 4 L12 dimers bind in a sequential fashion. Binds GTP-bound translation factors.

Its function is as follows. Forms part of the ribosomal stalk which helps the ribosome interact with GTP-bound translation factors. Is thus essential for accurate translation. This is Large ribosomal subunit protein bL12 from Halalkalibacterium halodurans (strain ATCC BAA-125 / DSM 18197 / FERM 7344 / JCM 9153 / C-125) (Bacillus halodurans).